The chain runs to 207 residues: 3-demethoxyubiquinol 3-hydroxylase (207 aa).

6 residues coordinate Fe cation: glutamate 56, glutamate 86, histidine 89, glutamate 138, glutamate 170, and histidine 173.

The protein belongs to the COQ7 family. It depends on Fe cation as a cofactor.

It localises to the cell membrane. The enzyme catalyses a 5-methoxy-2-methyl-3-(all-trans-polyprenyl)benzene-1,4-diol + AH2 + O2 = a 3-demethylubiquinol + A + H2O. The protein operates within cofactor biosynthesis; ubiquinone biosynthesis. In terms of biological role, catalyzes the hydroxylation of 2-nonaprenyl-3-methyl-6-methoxy-1,4-benzoquinol during ubiquinone biosynthesis. In Cupriavidus taiwanensis (strain DSM 17343 / BCRC 17206 / CCUG 44338 / CIP 107171 / LMG 19424 / R1) (Ralstonia taiwanensis (strain LMG 19424)), this protein is 3-demethoxyubiquinol 3-hydroxylase.